The chain runs to 367 residues: MAASDALQSIVYSRGSLRLLDQRKLPLEMEYIDVKSSADGWNAIRDMVVRGAPAIAIAAALALAVEVSDLDFIGTPEEAASFVSKKLEYLVSSRPTAVNLSDAATKLQTLVSKAAETAKDSKSIFQVYIEAAETMLVDDVADNKAIGSHGAVFLQRQLANSKKISVLTHCNTGSLATAGYGTALGVIRALHSGGVLEKAFCTETRPFNQGSRLTAFELVHEKIPATLIADSAAAALMKQGHVQAVIVGADRIAANGDTANKIGTYNLAISAKHHSVQFYVSAPVTSIDLSLPSGDEIVIEERSPKELLNSEGGLGKQVAASGISVWNPAFDVTPANLITAIITEKGVITKTDADGSFDIKGFLLPAK.

Asp250 (proton donor) is an active-site residue.

The protein belongs to the eIF-2B alpha/beta/delta subunits family. MtnA subfamily.

It localises to the cytoplasm. The protein localises to the nucleus. It catalyses the reaction 5-(methylsulfanyl)-alpha-D-ribose 1-phosphate = 5-(methylsulfanyl)-D-ribulose 1-phosphate. It participates in amino-acid biosynthesis; L-methionine biosynthesis via salvage pathway; L-methionine from S-methyl-5-thio-alpha-D-ribose 1-phosphate: step 1/6. Its function is as follows. Catalyzes the interconversion of methylthioribose-1-phosphate (MTR-1-P) into methylthioribulose-1-phosphate (MTRu-1-P). This is Methylthioribose-1-phosphate isomerase (IDI2) from Zea mays (Maize).